Reading from the N-terminus, the 386-residue chain is MTGSISTSWLLSSPSNSNSASSSESYSFIATLKPVRYYPFQSLTPNRISSRSPLPSIQIRAGIRELRERIDSVKNTQKITEAMRLVAAARVRRAQDAVIKGRPFTETLVEILYSINQSAQLEDIDFPLSIVRPVKRVALVVVTGDKGLCGGFNNAVTKKATLRVQELKQRGIDCVVISVGKKGNAYFSRRDEFDVDKCIEGGGVFPTTKEAQVIADDVFSLFVSEEVDKVELVYTKFVSLVKSDPVIHTLLPLSMKGESCDVKGECVDAIEDEMFRLTSKDGKLAVERTKLEVEKPEISPLMQFEQDPVQILDAMMPLYLNSQILRALQESLASELASRMNAMSNATDNAVELKKNLTMAYNRARQAKITGELLEIVAGAEALRES.

Residues 1 to 22 form a disordered region; the sequence is MTGSISTSWLLSSPSNSNSASS. Residues 1 to 60 constitute a chloroplast transit peptide; that stretch reads MTGSISTSWLLSSPSNSNSASSSESYSFIATLKPVRYYPFQSLTPNRISSRSPLPSIQIR. Cys-149 is an active-site residue. Cysteines 260 and 266 form a disulfide.

Belongs to the ATPase gamma chain family. In terms of assembly, F-type ATPases have 2 components, CF(1) - the catalytic core - and CF(0) - the membrane proton channel. CF(1) has five subunits: alpha(3), beta(3), gamma(1), delta(1), epsilon(1). CF(0) has four main subunits: a, b, b' and c.

The protein localises to the plastid. It is found in the chloroplast thylakoid membrane. Functionally, produces ATP from ADP in the presence of a proton gradient across the membrane. The gamma chain is believed to be important in regulating ATPase activity and the flow of protons through the CF(0) complex. The protein is ATP synthase gamma chain 2, chloroplastic (ATPC2) of Arabidopsis thaliana (Mouse-ear cress).